The sequence spans 88 residues: Large ribosomal subunit protein bL27 (88 aa).

It belongs to the bacterial ribosomal protein bL27 family.

This is Large ribosomal subunit protein bL27 from Mycolicibacterium smegmatis (strain ATCC 700084 / mc(2)155) (Mycobacterium smegmatis).